Reading from the N-terminus, the 161-residue chain is Photosystem I reaction center subunit XI (161 aa).

Transmembrane regions (helical) follow at residues Leu84 to Val104 and Phe126 to Glu146.

The protein belongs to the PsaL family.

Its subcellular location is the cellular thylakoid membrane. The sequence is that of Photosystem I reaction center subunit XI from Trichodesmium erythraeum (strain IMS101).